Here is a 393-residue protein sequence, read N- to C-terminus: Riboflavin biosynthesis protein RibBA (393 aa).

The DHBP synthase stretch occupies residues 1–200 (MQFDTIELAI…IKSLVAFRKA (200 aa)). D-ribulose 5-phosphate contacts are provided by residues 27 to 28 (RE), Asp-32, 139 to 143 (RNGHT), and Glu-163. Glu-28 is a binding site for Mg(2+). Mg(2+) is bound at residue His-142. The tract at residues 201 to 393 (VELNVNLKAK…TKKNKMGHLI (193 aa)) is GTP cyclohydrolase II. 249–253 (RMHSA) lines the GTP pocket. Zn(2+) contacts are provided by Cys-254, Cys-265, and Cys-267. Residues Gln-270, 291–293 (EGR), and Thr-313 each bind GTP. The active-site Proton acceptor; for GTP cyclohydrolase activity is the Asp-325. The active-site Nucleophile; for GTP cyclohydrolase activity is the Arg-327. GTP-binding residues include Ser-348 and Lys-353.

It in the N-terminal section; belongs to the DHBP synthase family. In the C-terminal section; belongs to the GTP cyclohydrolase II family. It depends on Mg(2+) as a cofactor. Requires Mn(2+) as cofactor. The cofactor is Zn(2+).

It carries out the reaction D-ribulose 5-phosphate = (2S)-2-hydroxy-3-oxobutyl phosphate + formate + H(+). The catalysed reaction is GTP + 4 H2O = 2,5-diamino-6-hydroxy-4-(5-phosphoribosylamino)-pyrimidine + formate + 2 phosphate + 3 H(+). The protein operates within cofactor biosynthesis; riboflavin biosynthesis; 2-hydroxy-3-oxobutyl phosphate from D-ribulose 5-phosphate: step 1/1. It participates in cofactor biosynthesis; riboflavin biosynthesis; 5-amino-6-(D-ribitylamino)uracil from GTP: step 1/4. Catalyzes the conversion of D-ribulose 5-phosphate to formate and 3,4-dihydroxy-2-butanone 4-phosphate. In terms of biological role, catalyzes the conversion of GTP to 2,5-diamino-6-ribosylamino-4(3H)-pyrimidinone 5'-phosphate (DARP), formate and pyrophosphate. The chain is Riboflavin biosynthesis protein RibBA from Staphylococcus epidermidis (strain ATCC 12228 / FDA PCI 1200).